Here is a 333-residue protein sequence, read N- to C-terminus: 4-hydroxythreonine-4-phosphate dehydrogenase (333 aa).

Histidine 133 and threonine 134 together coordinate substrate. 3 residues coordinate a divalent metal cation: histidine 169, histidine 214, and histidine 269. Residues lysine 277, asparagine 286, and arginine 295 each coordinate substrate.

It belongs to the PdxA family. Homodimer. Requires Zn(2+) as cofactor. It depends on Mg(2+) as a cofactor. The cofactor is Co(2+).

Its subcellular location is the cytoplasm. The catalysed reaction is 4-(phosphooxy)-L-threonine + NAD(+) = 3-amino-2-oxopropyl phosphate + CO2 + NADH. The protein operates within cofactor biosynthesis; pyridoxine 5'-phosphate biosynthesis; pyridoxine 5'-phosphate from D-erythrose 4-phosphate: step 4/5. Its function is as follows. Catalyzes the NAD(P)-dependent oxidation of 4-(phosphooxy)-L-threonine (HTP) into 2-amino-3-oxo-4-(phosphooxy)butyric acid which spontaneously decarboxylates to form 3-amino-2-oxopropyl phosphate (AHAP). The sequence is that of 4-hydroxythreonine-4-phosphate dehydrogenase from Caulobacter vibrioides (strain ATCC 19089 / CIP 103742 / CB 15) (Caulobacter crescentus).